The primary structure comprises 473 residues: Putative amidase AmiC (473 aa).

Residues lysine 82 and serine 157 each act as charge relay system in the active site. Catalysis depends on serine 181, which acts as the Acyl-ester intermediate.

It belongs to the amidase family.

It carries out the reaction a monocarboxylic acid amide + H2O = a monocarboxylate + NH4(+). The sequence is that of Putative amidase AmiC (amiC) from Mycobacterium bovis (strain ATCC BAA-935 / AF2122/97).